The following is a 424-amino-acid chain: Insertion element IS2A uncharacterized 48.2 kDa protein (424 aa).

An Integrase catalytic domain is found at 229–412 (KPAVPPSKRA…SPREYLRHGA (184 aa)).

The protein belongs to the transposase 8 family.

The protein is Insertion element IS2A uncharacterized 48.2 kDa protein of Escherichia coli.